Consider the following 156-residue polypeptide: Small ribosomal subunit protein uS7 (156 aa).

Belongs to the universal ribosomal protein uS7 family. As to quaternary structure, part of the 30S ribosomal subunit. Contacts proteins S9 and S11.

Functionally, one of the primary rRNA binding proteins, it binds directly to 16S rRNA where it nucleates assembly of the head domain of the 30S subunit. Is located at the subunit interface close to the decoding center, probably blocks exit of the E-site tRNA. This Anaeromyxobacter dehalogenans (strain 2CP-C) protein is Small ribosomal subunit protein uS7.